The primary structure comprises 241 residues: tRNA (guanine-N(7)-)-methyltransferase (241 aa).

A compositionally biased stretch (polar residues) spans 1–10 (MTESNDTPIQ). The tract at residues 1–20 (MTESNDTPIQTEEGDERQHR) is disordered. S-adenosyl-L-methionine-binding residues include Glu-71, Glu-96, Asp-123, and Asp-146. Asp-146 is an active-site residue. Substrate-binding positions include Lys-150, Asp-182, and 219 to 222 (TKFE).

It belongs to the class I-like SAM-binding methyltransferase superfamily. TrmB family.

It catalyses the reaction guanosine(46) in tRNA + S-adenosyl-L-methionine = N(7)-methylguanosine(46) in tRNA + S-adenosyl-L-homocysteine. The protein operates within tRNA modification; N(7)-methylguanine-tRNA biosynthesis. Functionally, catalyzes the formation of N(7)-methylguanine at position 46 (m7G46) in tRNA. This Pseudomonas fluorescens (strain Pf0-1) protein is tRNA (guanine-N(7)-)-methyltransferase.